The sequence spans 391 residues: Leucine-rich repeat-containing protein 74B (391 aa).

The interval 1-38 is disordered; the sequence is MKGPCEVQKNEDQEGEAAATGPQAETLEAERSWTADSH. A compositionally biased stretch (basic and acidic residues) spans 28–38; the sequence is EAERSWTADSH. 9 LRR repeats span residues 106-126, 134-154, 162-182, 190-211, 218-239, 246-259, 274-294, 302-323, and 332-354; these read YIKRLDLRDNGLCGAGAEALA, IISDVDLSENQIGAAGLQAIC, TVEKMQLQGNRLEEQAAQHLA, GLKSLDLSYNQLNDLAGEILGP, GLTELNLSWNHLRGLGATAFAR, FLKVLDISHNGFGD, VLEELNMRNNRISVSGALKLG, TLRILIISKNPIRSDGCVGLLK, and ALELLDVSDIQVSRECEDLASSM. Residues 371-391 are disordered; the sequence is KDWPQASTPSQPASAPSDSGL. The segment covering 374–391 has biased composition (low complexity); the sequence is PQASTPSQPASAPSDSGL.

In Mus musculus (Mouse), this protein is Leucine-rich repeat-containing protein 74B.